The primary structure comprises 448 residues: Trk system potassium uptake protein TrkA homolog 2 (448 aa).

Positions 1-124 (MKAVVIGAGE…RAQVGVDIMI (124 aa)) constitute an RCK N-terminal 1 domain. NAD(+) contacts are provided by residues 7–11 (GAGEV), E29, 70–71 (TG), and R101. An RCK C-terminal 1 domain is found at 144–225 (IDAEMFAGGK…MADLENVFGN (82 aa)). The 119-residue stretch at 230–348 (RNRILLIGCG…FEMVGIDIAV (119 aa)) folds into the RCK N-terminal 2 domain. Position 232–262 (232–262 (RILLIGCGIVGFYLAKIIDKDENADLKVIEY)) interacts with NAD(+). An RCK C-terminal 2 domain is found at 368-448 (EALATIEGEK…AVRSVEKLFK (81 aa)).

In terms of biological role, part of a potassium transport system. In Methanosarcina mazei (strain ATCC BAA-159 / DSM 3647 / Goe1 / Go1 / JCM 11833 / OCM 88) (Methanosarcina frisia), this protein is Trk system potassium uptake protein TrkA homolog 2 (trkA2).